A 259-amino-acid chain; its full sequence is Glutamate 5-kinase (259 aa).

Lys18 is an ATP binding site. Ser54, Asp141, and Asn153 together coordinate substrate. Position 173-174 (173-174) interacts with ATP; that stretch reads SD.

This sequence belongs to the glutamate 5-kinase family.

Its subcellular location is the cytoplasm. It carries out the reaction L-glutamate + ATP = L-glutamyl 5-phosphate + ADP. Its pathway is amino-acid biosynthesis; L-proline biosynthesis; L-glutamate 5-semialdehyde from L-glutamate: step 1/2. Functionally, catalyzes the transfer of a phosphate group to glutamate to form L-glutamate 5-phosphate. The chain is Glutamate 5-kinase from Clavibacter michiganensis subsp. michiganensis (strain NCPPB 382).